Here is an 85-residue protein sequence, read N- to C-terminus: Small ribosomal subunit protein bS20 (85 aa).

Disordered stretches follow at residues 1 to 25 (MANI…ASIK) and 62 to 85 (ARKG…QVNA).

It belongs to the bacterial ribosomal protein bS20 family.

In terms of biological role, binds directly to 16S ribosomal RNA. The polypeptide is Small ribosomal subunit protein bS20 (Bacillus cereus (strain G9842)).